The sequence spans 194 residues: ATP-dependent Clp protease proteolytic subunit (194 aa).

The active-site Nucleophile is S97. H122 is an active-site residue.

It belongs to the peptidase S14 family. As to quaternary structure, fourteen ClpP subunits assemble into 2 heptameric rings which stack back to back to give a disk-like structure with a central cavity, resembling the structure of eukaryotic proteasomes.

Its subcellular location is the cytoplasm. It catalyses the reaction Hydrolysis of proteins to small peptides in the presence of ATP and magnesium. alpha-casein is the usual test substrate. In the absence of ATP, only oligopeptides shorter than five residues are hydrolyzed (such as succinyl-Leu-Tyr-|-NHMec, and Leu-Tyr-Leu-|-Tyr-Trp, in which cleavage of the -Tyr-|-Leu- and -Tyr-|-Trp bonds also occurs).. Cleaves peptides in various proteins in a process that requires ATP hydrolysis. Has a chymotrypsin-like activity. Plays a major role in the degradation of misfolded proteins. In Thermus thermophilus (strain ATCC BAA-163 / DSM 7039 / HB27), this protein is ATP-dependent Clp protease proteolytic subunit.